The sequence spans 369 residues: LIM homeobox transcription factor 1-beta (369 aa).

LIM zinc-binding domains are found at residues 23–73 (CEGC…CKQD) and 82–135 (CSGC…CKGD). The tract at residues 143–196 (LSSVSPDESDSVKSEDEDGDMKPAKGQGSQSKGGGDDGKDPRRPKRPRTILTTQ) is disordered. The segment at residues 186–245 (PKRPRTILTTQQRRAFKASFEVSSKPCRKVRETLAAETGLSVRVVQVWFQNQRAKMKKLA) is a DNA-binding region (homeobox).

Interacts with DHX9.

Its subcellular location is the nucleus. Its function is as follows. Transcription factor involved in the regulation of podocyte-expressed genes. Essential for the specification of dorsal limb fate at both the zeugopodal and autopodal levels. In Mesocricetus auratus (Golden hamster), this protein is LIM homeobox transcription factor 1-beta (LMX1B).